The sequence spans 105 residues: Circadian clock oscillator protein KaiB (105 aa).

It belongs to the KaiB family. As to quaternary structure, the KaiABC complex composition changes during the circadian cycle to control KaiC phosphorylation. Complexes KaiC(6), KaiA(2-4):KaiC(6), KaiB(6):KaiC(6) and KaiC(6):KaiB(6):KaiA(12) are among the most important forms, many form cooperatively. Undergoes a major conformational rearrangment; in the free state forms homotetramers as a dimer of dimers. When bound to the CI domain of KaiC switches to a monomeric thioredoxin-fold (KaiB(fs)). KaiB(fs) binds CikA, leading it to dephosphorylate phospho-RpaA.

Key component of the KaiABC oscillator complex, which constitutes the main circadian regulator in cyanobacteria. Complex composition changes during the circadian cycle to control KaiC phosphorylation. KaiA stimulates KaiC autophosphorylation, while KaiB sequesters KaiA, leading to KaiC autodephosphorylation. Phospho-Ser-431 KaiC accumulation triggers binding of KaiB to form the KaiB(6):KaiC(6) complex, leading to changes in output regulators CikA and SasA. KaiB switches to a thioredoxin-like fold (KaiB(fs)) when bound to KaiC. KaiB(6):KaiC(6) formation exposes a site for KaiA binding that sequesters KaiA from KaiC, making the KaiC(6):KaiB(6):KaiA(12) complex that results in KaiC autodephosphorylation. In terms of biological role, a metamorphic protein which reversibly switches between an inactive tetrameric fold and a rare, thioredoxin-like monomeric fold (KaiB(fs)). KaiB(fs) binds phospho-KaiC, KaiA and CikA. KaiA and CikA compete for binding to KaiB(fs), and KaiB(fs) and SasA compete for binding to KaiC, thus the clock oscillator and output signal pathway are tightly coupled. The protein is Circadian clock oscillator protein KaiB of Cyanothece sp. (strain PCC 7425 / ATCC 29141).